The sequence spans 98 residues: NADH-ubiquinone oxidoreductase chain 4L (98 aa).

The next 3 membrane-spanning stretches (helical) occupy residues 1-21 (MSIVYMNVMLAFMIALIGTLL), 29-49 (SLMCLEGMMLAMYIFISLISL), and 59-79 (VPLIILVFAACEAALGLALLV).

The protein belongs to the complex I subunit 4L family. In terms of assembly, core subunit of respiratory chain NADH dehydrogenase (Complex I) which is composed of 45 different subunits.

The protein resides in the mitochondrion inner membrane. It carries out the reaction a ubiquinone + NADH + 5 H(+)(in) = a ubiquinol + NAD(+) + 4 H(+)(out). Functionally, core subunit of the mitochondrial membrane respiratory chain NADH dehydrogenase (Complex I) which catalyzes electron transfer from NADH through the respiratory chain, using ubiquinone as an electron acceptor. Part of the enzyme membrane arm which is embedded in the lipid bilayer and involved in proton translocation. This Hemiechinus auritus (Long-eared hedgehog) protein is NADH-ubiquinone oxidoreductase chain 4L (MT-ND4L).